The following is a 208-amino-acid chain: Holliday junction branch migration complex subunit RuvA (208 aa).

The segment at 1 to 63 (MIAFVSGPVA…EDSLTLYGFA (63 aa)) is domain I. The tract at residues 64-142 (NDDERQVFEL…EPVGAHIGQQ (79 aa)) is domain II. Positions 143–147 (GIGTP) are flexible linker. Positions 148-208 (VTSGWRDQLQ…AALQTLNRAR (61 aa)) are domain III.

It belongs to the RuvA family. Homotetramer. Forms an RuvA(8)-RuvB(12)-Holliday junction (HJ) complex. HJ DNA is sandwiched between 2 RuvA tetramers; dsDNA enters through RuvA and exits via RuvB. An RuvB hexamer assembles on each DNA strand where it exits the tetramer. Each RuvB hexamer is contacted by two RuvA subunits (via domain III) on 2 adjacent RuvB subunits; this complex drives branch migration. In the full resolvosome a probable DNA-RuvA(4)-RuvB(12)-RuvC(2) complex forms which resolves the HJ.

It localises to the cytoplasm. Functionally, the RuvA-RuvB-RuvC complex processes Holliday junction (HJ) DNA during genetic recombination and DNA repair, while the RuvA-RuvB complex plays an important role in the rescue of blocked DNA replication forks via replication fork reversal (RFR). RuvA specifically binds to HJ cruciform DNA, conferring on it an open structure. The RuvB hexamer acts as an ATP-dependent pump, pulling dsDNA into and through the RuvAB complex. HJ branch migration allows RuvC to scan DNA until it finds its consensus sequence, where it cleaves and resolves the cruciform DNA. The sequence is that of Holliday junction branch migration complex subunit RuvA from Streptomyces griseus subsp. griseus (strain JCM 4626 / CBS 651.72 / NBRC 13350 / KCC S-0626 / ISP 5235).